Reading from the N-terminus, the 260-residue chain is Hemin import ATP-binding protein HmuV (260 aa).

Residues 2–239 (IRAENITLIR…ETIARVYGIG (238 aa)) enclose the ABC transporter domain. Position 34–41 (34–41 (GPNGAGKS)) interacts with ATP.

The protein belongs to the ABC transporter superfamily. Heme (hemin) importer (TC 3.A.1.14.5) family. In terms of assembly, the complex is composed of two ATP-binding proteins (HmuV), two transmembrane proteins (HmuU) and a solute-binding protein (HmuT).

Its subcellular location is the cell inner membrane. In terms of biological role, part of the ABC transporter complex HmuTUV involved in hemin import. Responsible for energy coupling to the transport system. This is Hemin import ATP-binding protein HmuV from Agrobacterium fabrum (strain C58 / ATCC 33970) (Agrobacterium tumefaciens (strain C58)).